The chain runs to 1128 residues: Apoptosis-stimulating of p53 protein 2 (1128 aa).

A disordered region spans residues 85–120 (PPNRDIVSGPRSQDPSVKRNGVKVPGEHRRKENGVN). Positions 332–348 (NLPQQAVSAPSRVAAVG) are interaction with APPBP1. A disordered region spans residues 393–436 (MRSGAASQSKGSKAHPASPDWNPSNADLLPSQGSSVPQSAGTAL). Residues 413 to 433 (WNPSNADLLPSQGSSVPQSAG) are compositionally biased toward polar residues. 5 positions are modified to phosphoserine: Ser-479, Ser-555, Ser-568, Ser-571, and Ser-575. Disordered stretches follow at residues 549-596 (QARM…FPPA) and 654-705 (NPQQ…LPFL). Positions 562 to 574 (GQDQVLSPASKQE) are enriched in polar residues. A compositionally biased stretch (polar residues) spans 654-669 (NPQQHPENIYSCSQGK). Residues 684–693 (HESHENERIP) show a composition bias toward basic and acidic residues. A phosphoserine mark is found at Ser-697, Ser-713, and Ser-736. Disordered regions lie at residues 723-748 (KLSN…GPNI), 802-824 (SLVP…SDVP), and 870-907 (PPPP…KRTN). Residues 866–875 (YPPYPPPPYP) carry the SH3-binding motif. The mediates interaction with APC2 stretch occupies residues 876–1128 (SGEPEVSEED…RIKPRQRSLA (253 aa)). 2 ANK repeats span residues 958–987 (EGIT…NVNA) and 991–1020 (DGWT…AVFA). Positions 1057–1119 (MNKGVIYALW…PRNLLGLYPR (63 aa)) constitute an SH3 domain.

This sequence belongs to the ASPP family. As to quaternary structure, interacts with P53/TP53; the interaction promotes pro-apoptotic activity. Interacts with BCL2. Interacts with protein phosphatase 1. Interacts with RELA NF-kappa-B subunit. This interaction probably prevents the activation of apoptosis, possibly by preventing its interaction with p53/TP53. Interacts with APC2 and APPBP1. Interacts with DDX42 (via the C-terminus); the interaction is not inhibited by TP53BP2 ubiquitination and is independent of p53/TP53.

Its subcellular location is the cytoplasm. The protein localises to the perinuclear region. It localises to the nucleus. Its function is as follows. Regulator that plays a central role in regulation of apoptosis and cell growth via its interactions with proteins such as TP53. Regulates p53/TP53 by enhancing the DNA binding and transactivation function of p53/TP53 on the promoters of proapoptotic genes in vivo. Inhibits the ability of APPBP1 to conjugate NEDD8 to CUL1, and thereby decreases APPBP1 ability to induce apoptosis. Impedes cell cycle progression at G2/M. Its apoptosis-stimulating activity is inhibited by its interaction with DDX42. The polypeptide is Apoptosis-stimulating of p53 protein 2 (Tp53bp2) (Mus musculus (Mouse)).